A 385-amino-acid chain; its full sequence is Sulfoquinovose monooxygenase (385 aa).

The tract at residues 366 to 385 (AYGRVPSETPATPLGNGERH) is disordered.

The protein belongs to the SsuD family. Homodimer.

The catalysed reaction is 6-sulfo-D-quinovose + FMNH2 + O2 = 6-dehydro-D-glucose + FMN + sulfite + H2O + 2 H(+). In terms of biological role, part of the sulfoquinovose monooxygenase (sulfo-SMO) pathway, a D-sulfoquinovose degradation pathway that enables the complete utilization of all carbons within sulfoquinovose (SQ) with concomitant production of inorganic sulfite. Catalyzes the oxidative desulfurization of sulfoquinovose to sulfite and 6-dehydro-D-glucose. Is highly specific for sulfoquinovose and cannot use sulfoquinovosyl glycerol. FMNH(2) is provided by the FMN reductase SmoA. This is Sulfoquinovose monooxygenase from Agrobacterium fabrum (strain C58 / ATCC 33970) (Agrobacterium tumefaciens (strain C58)).